The primary structure comprises 436 residues: Trigger factor (436 aa).

The PPIase FKBP-type domain maps to 163–248; the sequence is GDRVTVDFEG…LKKIEAAHLP (86 aa).

Belongs to the FKBP-type PPIase family. Tig subfamily.

It localises to the cytoplasm. The enzyme catalyses [protein]-peptidylproline (omega=180) = [protein]-peptidylproline (omega=0). Involved in protein export. Acts as a chaperone by maintaining the newly synthesized protein in an open conformation. Functions as a peptidyl-prolyl cis-trans isomerase. This Albidiferax ferrireducens (strain ATCC BAA-621 / DSM 15236 / T118) (Rhodoferax ferrireducens) protein is Trigger factor.